The chain runs to 24 residues: Iron-regulated 31 kDa protein (24 aa).

It localises to the periplasm. Functionally, may be involved in iron uptake. In Haemophilus influenzae, this protein is Iron-regulated 31 kDa protein.